A 487-amino-acid polypeptide reads, in one-letter code: Betaine aldehyde dehydrogenase (487 aa).

Residues S26, I27, and D93 each coordinate K(+). G150–W152 contacts NAD(+). The active-site Charge relay system is K162. NAD(+) contacts are provided by residues K176 to E179 and S229 to T232. A K(+)-binding site is contributed by L244. The Proton acceptor role is filled by E250. G252, C284, and E384 together coordinate NAD(+). C284 serves as the catalytic Nucleophile. Cysteine sulfenic acid (-SOH) is present on C284. K(+)-binding residues include K454 and G457. E461 (charge relay system) is an active-site residue.

This sequence belongs to the aldehyde dehydrogenase family. Dimer of dimers. K(+) serves as cofactor.

It carries out the reaction betaine aldehyde + NAD(+) + H2O = glycine betaine + NADH + 2 H(+). It functions in the pathway amine and polyamine biosynthesis; betaine biosynthesis via choline pathway; betaine from betaine aldehyde: step 1/1. Functionally, involved in the biosynthesis of the osmoprotectant glycine betaine. Catalyzes the irreversible oxidation of betaine aldehyde to the corresponding acid. The protein is Betaine aldehyde dehydrogenase of Sinorhizobium fredii (strain NBRC 101917 / NGR234).